A 5098-amino-acid polypeptide reads, in one-letter code: Malformin synthetase mlfA (5098 aa).

Residues 225–616 (ERHAANRPHS…CGRADTQVKL (392 aa)) form an adenylation 1 region. The region spanning 756 to 829 (SRLEQEIQLA…EAASLAKVQE (74 aa)) is the Carrier 1 domain. Ser790 carries the post-translational modification O-(pantetheine 4'-phosphoryl)serine. The interval 867–1298 (EDVFPCTTMQ…ALDSLTLLQA (432 aa)) is condensation 1. An adenylation 2 region spans residues 1326–1715 (DGWVTRQPES…GRKDTQVKLR (390 aa)). Residues 1853-1930 (TAASELERTL…QLAAEFGEPA (78 aa)) form the Carrier 2 domain. O-(pantetheine 4'-phosphoryl)serine is present on Ser1890. 2 disordered regions span residues 1930-1960 (AGQS…DGVD) and 1993-2022 (GSSS…RVVS). 2 stretches are compositionally biased toward low complexity: residues 1933–1957 (SASS…STND) and 1993–2011 (GSSS…SSSS). Positions 2063–2478 (EDIYPATALQ…ALSHSDRQTL (416 aa)) are condensation 2. The tract at residues 2501–2893 (VRTPHAPAVC…IGRRDGQLKL (393 aa)) is adenylation 3. The Carrier 3 domain occupies 3029 to 3105 (RPVTAQEREM…QLMRHLSATR (77 aa)). Ser3066 is subject to O-(pantetheine 4'-phosphoryl)serine. 2 condensation regions span residues 3122-3587 (WVAL…TYDQ) and 3608-4027 (NIYP…EQLM). Positions 4052–4442 (HASREAVCAW…VGRKDNQIKF (391 aa)) are adenylation 4. In terms of domain architecture, Carrier 4 spans 4576–4652 (MPSTAAERKM…DLAYRTTNLV (77 aa)). Ser4613 carries the post-translational modification O-(pantetheine 4'-phosphoryl)serine. The condensation 5 stretch occupies residues 4689-5016 (DVLPTTSFQR…LQTIVQHQNN (328 aa)).

Belongs to the NRP synthetase family.

Its pathway is secondary metabolite biosynthesis. In terms of biological role, nonribosomal peptide synthetase; part of the gene cluster that mediates the biosynthesis of malformins, cyclic pentapeptides with a disulfide bond between 2 consecutive cysteins, that show potential anti-tumor as well as antimalarial and antitrypanosomal properties. The nonribosomal peptide synthetase mlfA is responsible of the formation of the cyclic pentapeptide. The malformin biosynthesis clusters in malformin-producing fungi also contain enzymes involved in the formation of the disulfide bond between the two consecutive cysteins within malformins, in addition to additional tailoring enzymes such as methyltransferases or oxidoreductases. They are also composed of up to 4 major facilitator superfamily transporters, and transcription factors probably involved in the regulation of the expression of those clusters. This chain is Malformin synthetase mlfA, found in Aspergillus homomorphus (strain CBS 101889).